Here is a 321-residue protein sequence, read N- to C-terminus: Nodulation protein D 1 (321 aa).

An HTH lysR-type domain is found at Leu6–Thr63. The segment at residues Leu23–Thr42 is a DNA-binding region (H-T-H motif).

The protein belongs to the LysR transcriptional regulatory family.

Its function is as follows. NodD regulates the expression of the nodABCFE genes which encode other nodulation proteins. NodD is also a negative regulator of its own expression. Binds flavonoids as inducers. This Bradyrhizobium japonicum protein is Nodulation protein D 1 (nodD1).